The primary structure comprises 197 residues: Ribonuclease HII (197 aa).

Residues 9 to 197 enclose the RNase H type-2 domain; the sequence is ELIAGVDEVG…APVKKALEQF (189 aa). Asp-15, Glu-16, and Asp-107 together coordinate a divalent metal cation.

Belongs to the RNase HII family. Requires Mn(2+) as cofactor. Mg(2+) serves as cofactor.

Its subcellular location is the cytoplasm. It carries out the reaction Endonucleolytic cleavage to 5'-phosphomonoester.. Endonuclease that specifically degrades the RNA of RNA-DNA hybrids. This Haemophilus influenzae (strain 86-028NP) protein is Ribonuclease HII.